A 551-amino-acid polypeptide reads, in one-letter code: DNA mismatch repair protein MutL (551 aa).

This sequence belongs to the DNA mismatch repair MutL/HexB family.

In terms of biological role, this protein is involved in the repair of mismatches in DNA. It is required for dam-dependent methyl-directed DNA mismatch repair. May act as a 'molecular matchmaker', a protein that promotes the formation of a stable complex between two or more DNA-binding proteins in an ATP-dependent manner without itself being part of a final effector complex. In Thermosipho melanesiensis (strain DSM 12029 / CIP 104789 / BI429), this protein is DNA mismatch repair protein MutL.